Consider the following 186-residue polypeptide: Elongation factor P (186 aa).

The protein belongs to the elongation factor P family.

The protein localises to the cytoplasm. Its pathway is protein biosynthesis; polypeptide chain elongation. Its function is as follows. Involved in peptide bond synthesis. Stimulates efficient translation and peptide-bond synthesis on native or reconstituted 70S ribosomes in vitro. Probably functions indirectly by altering the affinity of the ribosome for aminoacyl-tRNA, thus increasing their reactivity as acceptors for peptidyl transferase. This is Elongation factor P from Prochlorococcus marinus (strain MIT 9211).